The primary structure comprises 241 residues: Probable transcriptional regulator PhnF (241 aa).

Residues 11–78 (PTRYQEIAAK…QGVGVLVLMR (68 aa)) enclose the HTH gntR-type domain. The H-T-H motif DNA-binding region spans 38–57 (EQQLAARFEVNRHTLRRAID).

Its function is as follows. Belongs to an operon involved in alkylphosphonate uptake and C-P lyase. Exact function not known. By similarity could be a transcriptional regulator. This is Probable transcriptional regulator PhnF (phnF) from Escherichia coli (strain K12).